A 364-amino-acid polypeptide reads, in one-letter code: DNA polymerase IV (364 aa).

Residues 14–198 form the UmuC domain; sequence IIHIDMDAFF…LPIEKFHGVG (185 aa). D18 and D116 together coordinate Mg(2+). E117 is a catalytic residue.

This sequence belongs to the DNA polymerase type-Y family. In terms of assembly, monomer. It depends on Mg(2+) as a cofactor.

The protein resides in the cytoplasm. The enzyme catalyses DNA(n) + a 2'-deoxyribonucleoside 5'-triphosphate = DNA(n+1) + diphosphate. In terms of biological role, poorly processive, error-prone DNA polymerase involved in untargeted mutagenesis. Copies undamaged DNA at stalled replication forks, which arise in vivo from mismatched or misaligned primer ends. These misaligned primers can be extended by PolIV. Exhibits no 3'-5' exonuclease (proofreading) activity. May be involved in translesional synthesis, in conjunction with the beta clamp from PolIII. The polypeptide is DNA polymerase IV (Streptococcus pyogenes serotype M4 (strain MGAS10750)).